Reading from the N-terminus, the 1392-residue chain is DNA-directed RNA polymerase subunit beta' (1392 aa).

Zn(2+) contacts are provided by C70, C72, C85, and C88. 3 residues coordinate Mg(2+): D460, D462, and D464. C810, C884, C891, and C894 together coordinate Zn(2+).

This sequence belongs to the RNA polymerase beta' chain family. In terms of assembly, the RNAP catalytic core consists of 2 alpha, 1 beta, 1 beta' and 1 omega subunit. When a sigma factor is associated with the core the holoenzyme is formed, which can initiate transcription. Mg(2+) serves as cofactor. Zn(2+) is required as a cofactor.

The enzyme catalyses RNA(n) + a ribonucleoside 5'-triphosphate = RNA(n+1) + diphosphate. Functionally, DNA-dependent RNA polymerase catalyzes the transcription of DNA into RNA using the four ribonucleoside triphosphates as substrates. This chain is DNA-directed RNA polymerase subunit beta', found in Geobacter metallireducens (strain ATCC 53774 / DSM 7210 / GS-15).